Reading from the N-terminus, the 611-residue chain is MSKIIGIDLGTTNSCVSVLEGGEPKVIPNPEGNRTTPSVVAFKNGERQVGEVAKRQSVTNPNTIISIKSKMGTAEKVTVEDKDYTPQEVSAMILQYLKGYAEDYLGEKVTKAVITVPAYFNDAQRQATKDAGKIAGLEVERIINEPTAAALAYGLDKQDQDQKVLVFDLGGGTFDVSILELGDGVFEVLATAGDNKLGGDDFDDAIIEYLVAEFKKENGIDLSKDKMAMQRLKDAAEKAKKDLSGVTSTQISLPFITAGEAGPLHLEISLTRAKFDEITLPLVNRTVGPVRQALSDAGLSTSEIDQVILVGGSTRIPAVQEAVRKETNKEPHRGVNPDEVVAMGAAVQGGVLTGDVKDVVLLDVTPLSLGIETMGGVFTKLIDRNTTIPTSKSQVFSTAADNQPAVDIHVLQGERSMAADNKTLGRFQLADIPPAPRGVPQIEVTFDIDKNGIVSVKAKDLGTNKEQTIVIQSDSGLSEAEIERMVKDAEANADADAKRKEEADLRNEADQLVFQVDKTITDLGEQITEDEKKSVEDARDELKKALEAGELEGIKAAKEKLEGVLQPLVMKVYEQAAAAAQAAQGGEADAGAGKKDDGVVDADFEEVKDDK.

T173 carries the post-translational modification Phosphothreonine; by autocatalysis. A compositionally biased stretch (low complexity) spans 577–591 (AAAAQAAQGGEADAG). The disordered stretch occupies residues 577–611 (AAAAQAAQGGEADAGAGKKDDGVVDADFEEVKDDK). Acidic residues predominate over residues 599 to 611 (VVDADFEEVKDDK).

Belongs to the heat shock protein 70 family.

In terms of biological role, acts as a chaperone. This is Chaperone protein DnaK from Lysinibacillus sphaericus (strain C3-41).